Here is a 430-residue protein sequence, read N- to C-terminus: Histidine--tRNA ligase (430 aa).

The protein belongs to the class-II aminoacyl-tRNA synthetase family. Homodimer.

It localises to the cytoplasm. The catalysed reaction is tRNA(His) + L-histidine + ATP = L-histidyl-tRNA(His) + AMP + diphosphate + H(+). This is Histidine--tRNA ligase from Acinetobacter baumannii (strain ATCC 17978 / DSM 105126 / CIP 53.77 / LMG 1025 / NCDC KC755 / 5377).